The primary structure comprises 245 residues: 1-(5-phosphoribosyl)-5-[(5-phosphoribosylamino)methylideneamino] imidazole-4-carboxamide isomerase (245 aa).

D7 acts as the Proton acceptor in catalysis. Catalysis depends on D129, which acts as the Proton donor.

This sequence belongs to the HisA/HisF family.

Its subcellular location is the cytoplasm. It carries out the reaction 1-(5-phospho-beta-D-ribosyl)-5-[(5-phospho-beta-D-ribosylamino)methylideneamino]imidazole-4-carboxamide = 5-[(5-phospho-1-deoxy-D-ribulos-1-ylimino)methylamino]-1-(5-phospho-beta-D-ribosyl)imidazole-4-carboxamide. It functions in the pathway amino-acid biosynthesis; L-histidine biosynthesis; L-histidine from 5-phospho-alpha-D-ribose 1-diphosphate: step 4/9. The polypeptide is 1-(5-phosphoribosyl)-5-[(5-phosphoribosylamino)methylideneamino] imidazole-4-carboxamide isomerase (Escherichia coli O6:K15:H31 (strain 536 / UPEC)).